The following is a 456-amino-acid chain: tRNA modification GTPase MnmE (456 aa).

(6S)-5-formyl-5,6,7,8-tetrahydrofolate-binding residues include Arg26, Glu86, and Arg125. The 155-residue stretch at 222-376 (GLSTAIIGRP…IEDRINQLFF (155 aa)) folds into the TrmE-type G domain. A K(+)-binding site is contributed by Asn232. GTP-binding positions include 232-237 (NVGKSS), 251-257 (TDIEGTT), and 276-279 (DTAG). A Mg(2+)-binding site is contributed by Ser236. Positions 251, 253, and 256 each coordinate K(+). Thr257 serves as a coordination point for Mg(2+). Lys456 provides a ligand contact to (6S)-5-formyl-5,6,7,8-tetrahydrofolate.

It belongs to the TRAFAC class TrmE-Era-EngA-EngB-Septin-like GTPase superfamily. TrmE GTPase family. As to quaternary structure, homodimer. Heterotetramer of two MnmE and two MnmG subunits. It depends on K(+) as a cofactor.

Its subcellular location is the cytoplasm. Its function is as follows. Exhibits a very high intrinsic GTPase hydrolysis rate. Involved in the addition of a carboxymethylaminomethyl (cmnm) group at the wobble position (U34) of certain tRNAs, forming tRNA-cmnm(5)s(2)U34. This chain is tRNA modification GTPase MnmE, found in Streptococcus thermophilus (strain CNRZ 1066).